A 102-amino-acid polypeptide reads, in one-letter code: Small ribosomal subunit protein uS10 (102 aa).

The protein belongs to the universal ribosomal protein uS10 family. As to quaternary structure, part of the 30S ribosomal subunit.

In terms of biological role, involved in the binding of tRNA to the ribosomes. In Pelotomaculum thermopropionicum (strain DSM 13744 / JCM 10971 / SI), this protein is Small ribosomal subunit protein uS10.